We begin with the raw amino-acid sequence, 228 residues long: Ribonuclease 3 (228 aa).

Residues 5–127 (LMALQARLQH…VIGAVYLDAG (123 aa)) form the RNase III domain. Mg(2+) is bound at residue Glu40. Residue Asp44 is part of the active site. 2 residues coordinate Mg(2+): Asp113 and Glu116. Residue Glu116 is part of the active site. Residues 154–224 (DPKTELQEWL…AAAMLQTLKA (71 aa)) enclose the DRBM domain.

Belongs to the ribonuclease III family. As to quaternary structure, homodimer. Mg(2+) is required as a cofactor.

It localises to the cytoplasm. The enzyme catalyses Endonucleolytic cleavage to 5'-phosphomonoester.. Its function is as follows. Digests double-stranded RNA. Involved in the processing of primary rRNA transcript to yield the immediate precursors to the large and small rRNAs (23S and 16S). Processes some mRNAs, and tRNAs when they are encoded in the rRNA operon. Processes pre-crRNA and tracrRNA of type II CRISPR loci if present in the organism. This chain is Ribonuclease 3, found in Albidiferax ferrireducens (strain ATCC BAA-621 / DSM 15236 / T118) (Rhodoferax ferrireducens).